The sequence spans 276 residues: Glucosamine-6-phosphate deaminase 2 (276 aa).

Asp-72 serves as the catalytic Proton acceptor; for enolization step. Residues 105-130 (HILDGNAADLQAECDAFENKIKEAGG) adopt a coiled-coil conformation. Residue Asp-141 is the For ring-opening step of the active site. The active-site Proton acceptor; for ring-opening step is the His-143. Residue Glu-148 is the For ring-opening step of the active site. Thr-161 bears the Phosphothreonine mark.

This sequence belongs to the glucosamine/galactosamine-6-phosphate isomerase family. In terms of assembly, homohexamer. As to expression, ubiquitous, with highest expression detected in testis, ovary, placenta, and heart.

It is found in the cytoplasm. It carries out the reaction alpha-D-glucosamine 6-phosphate + H2O = beta-D-fructose 6-phosphate + NH4(+). It functions in the pathway nucleotide-sugar biosynthesis; UDP-N-acetyl-alpha-D-glucosamine biosynthesis; alpha-D-glucosamine 6-phosphate from D-fructose 6-phosphate: step 1/1. Its activity is regulated as follows. Allosterically activated by N-acetylglucosamine-6-phosphate (GlcNAc6P). Catalyzes the reversible conversion of alpha-D-glucosamine 6-phosphate (GlcN-6P) into beta-D-fructose 6-phosphate (Fru-6P) and ammonium ion, a regulatory reaction step in de novo uridine diphosphate-N-acetyl-alpha-D-glucosamine (UDP-GlcNAc) biosynthesis via hexosamine pathway. Deamination is coupled to aldo-keto isomerization mediating the metabolic flux from UDP-GlcNAc toward Fru-6P. At high ammonium level can drive amination and isomerization of Fru-6P toward hexosamines and UDP-GlcNAc synthesis. Has a role in fine tuning the metabolic fluctuations of cytosolic UDP-GlcNAc and their effects on hyaluronan synthesis that occur during tissue remodeling. The protein is Glucosamine-6-phosphate deaminase 2 of Homo sapiens (Human).